Reading from the N-terminus, the 494-residue chain is Glutamyl-tRNA(Gln) amidotransferase subunit A (494 aa).

Residues K81 and S156 each act as charge relay system in the active site. S180 serves as the catalytic Acyl-ester intermediate.

Belongs to the amidase family. GatA subfamily. In terms of assembly, heterotrimer of A, B and C subunits.

The enzyme catalyses L-glutamyl-tRNA(Gln) + L-glutamine + ATP + H2O = L-glutaminyl-tRNA(Gln) + L-glutamate + ADP + phosphate + H(+). Its function is as follows. Allows the formation of correctly charged Gln-tRNA(Gln) through the transamidation of misacylated Glu-tRNA(Gln) in organisms which lack glutaminyl-tRNA synthetase. The reaction takes place in the presence of glutamine and ATP through an activated gamma-phospho-Glu-tRNA(Gln). The chain is Glutamyl-tRNA(Gln) amidotransferase subunit A from Mycolicibacterium gilvum (strain PYR-GCK) (Mycobacterium gilvum (strain PYR-GCK)).